The sequence spans 506 residues: Plant intracellular Ras-group-related LRR protein 1 (506 aa).

The tract at residues 24 to 48 (TAKSSSSSDVEPPPSKSDPSSSSNH) is disordered. Positions 143 to 193 (KSILKLNELHESYEKLLKEAEERLVRIYESAEKNAAAVAEEEAAEVEVNEE) form a coiled coil. 10 LRR repeats span residues 203–225 (ENPL…AFGK), 226–249 (IQGL…IAGL), 251–272 (NLLE…IGLL), 273–295 (SKLK…ICHC), 297–319 (SLVV…GFEL), 320–342 (VKLE…IGEM), 344–364 (SLRY…SFGL), 365–389 (LTNL…SFGD), 390–412 (LISL…AFGT), and 414–436 (VNLT…VVKQ). A GVYW motif is present at residues 437-449 (GVDAVKMYMGKRW).

It belongs to the SHOC2 family. As to expression, widely expressed.

Leucine-rich repeat protein that likely mediates protein interactions, possibly in the context of signal transduction. PIRL1 acts redundantly with PIRL9 in the differentiation of microspores into pollen. The protein is Plant intracellular Ras-group-related LRR protein 1 (PIRL1) of Arabidopsis thaliana (Mouse-ear cress).